Reading from the N-terminus, the 513-residue chain is NAD(P)H-quinone oxidoreductase subunit 2 (513 aa).

14 consecutive transmembrane segments (helical) span residues 12 to 32 (TLWP…VDLI), 41 to 61 (LPYL…PMWI), 77 to 97 (LSVV…LMSV), 104 to 124 (SLAT…AMLL), 130 to 150 (MAMI…LSGY), 165 to 185 (LLIG…LYGF), 199 to 219 (IVNL…GICF), 238 to 258 (PTPV…ALAI), 272 to 292 (WQTL…VVAI), 300 to 320 (MLAY…AIGT), 328 to 348 (ILYI…VVLF), 372 to 392 (LVLS…GFFG), 394 to 414 (LYLF…FGLV), and 456 to 476 (AGML…PPLI). Residues 494–505 (TATPVSRVSTGA) are compositionally biased toward polar residues. The segment at 494 to 513 (TATPVSRVSTGAQAPADHGR) is disordered.

Belongs to the complex I subunit 2 family. NDH-1 can be composed of about 15 different subunits; different subcomplexes with different compositions have been identified which probably have different functions.

The protein localises to the cell inner membrane. It catalyses the reaction a plastoquinone + NADH + (n+1) H(+)(in) = a plastoquinol + NAD(+) + n H(+)(out). The enzyme catalyses a plastoquinone + NADPH + (n+1) H(+)(in) = a plastoquinol + NADP(+) + n H(+)(out). Its function is as follows. NDH-1 shuttles electrons from an unknown electron donor, via FMN and iron-sulfur (Fe-S) centers, to quinones in the respiratory and/or the photosynthetic chain. The immediate electron acceptor for the enzyme in this species is believed to be plastoquinone. Couples the redox reaction to proton translocation, and thus conserves the redox energy in a proton gradient. Cyanobacterial NDH-1 also plays a role in inorganic carbon-concentration. The chain is NAD(P)H-quinone oxidoreductase subunit 2 from Gloeobacter violaceus (strain ATCC 29082 / PCC 7421).